The chain runs to 569 residues: Cell death protein 4 (569 aa).

The CARD domain maps to 1–91 (MLCEIECRAL…HLKDFLDEYL (91 aa)). In terms of domain architecture, NB-ARC spans 116-442 (DRKLLLGNVP…IWSCVIPVDI (327 aa)). ATP-binding positions include Phe131, 162–167 (GSGKSV), and Gln171. A Mg(2+)-binding site is contributed by Ser166.

Associates as an asymmetric homodimer with ced-9. Upon release from ced-9, forms an octamer, known as the apoptosome, and interacts with ced-3; the interaction results in ced-3 autoproteolytic cleavage and activation. The octamer (a tetramer of an asymmetric dimer) also interacts with two processed ced-3 to form a stable holoenzyme. Interacts with sex-determining protein fem-1. May form a complex composed of ced-3, ced-4 and mac-1 or of ced-9, ced-4 and mac-1. Within the complex, interacts with ced-4.

It localises to the mitochondrion. The protein resides in the cytoplasm. Its subcellular location is the perinuclear region. Plays a major role in programmed cell death (PCD, apoptosis). egl-1 binds to and directly inhibits the activity of ced-9, releasing the cell death activator ced-4 from a ced-9/ced-4 containing protein complex and allowing ced-4 to induce caspase ced-3 autoproteolytic cleavage and activation. Also forms a holoenzyme with processed ced-3 enhancing ced-3 activity. Component of the egl-1, ced-9, ced-4 and ced-3 apoptotic signaling cascade required for the initiation of programmed cell death in cells fated to die during embryonic and postembryonic development. During oogenesis, required for germline apoptosis downstream of ced-9 and upstream of ced-3 but independently of egl-1. May regulate germline apoptosis in response to DNA damage, probably downstream of let-60/ras and mpk-1 pathway. Regulates CEP neuron apoptosis in response to high Al(3+) levels. During male tail morphogenesis, promotes apoptosis of the tail-spike cell. During larval development, required for the elimination of transient presynaptic components downstream of egl-1 and ced-9 and upstream of ced-3 apoptotic pathway. Together with ain-1, a component of the miRNA-induced-silencing complex (miRISC), and probably upstream of ced-3, regulates temporal cell fate patterning during larval development. May play a role in resistance to S.typhimurium-mediated infection. In Caenorhabditis briggsae, this protein is Cell death protein 4.